The primary structure comprises 263 residues: Transcription factor bHLH27 (263 aa).

Residues 32–47 show a composition bias toward low complexity; the sequence is EAFSGSGESSSPDGAA. The segment at 32-61 is disordered; sequence EAFSGSGESSSPDGAATSPASSKNVVSERN. The segment covering 49-58 has biased composition (polar residues); that stretch reads SPASSKNVVS. The region spanning 50–99 is the bHLH domain; the sequence is PASSKNVVSERNRRQKLNQRLFALRSVVPNISKLDKASVIKDSIDYMQEL.

Homodimer. In terms of tissue distribution, expressed constitutively in roots, leaves, stems, and flowers.

The protein localises to the nucleus. This chain is Transcription factor bHLH27 (BHLH27), found in Arabidopsis thaliana (Mouse-ear cress).